Consider the following 216-residue polypeptide: Flavin prenyltransferase UbiX (216 aa).

FMN is bound by residues 9-11, S35, and R144; that span reads GAS. Dimethylallyl phosphate is bound by residues Y174 and R190.

Belongs to the UbiX/PAD1 family.

The enzyme catalyses dimethylallyl phosphate + FMNH2 = prenylated FMNH2 + phosphate. Functionally, flavin prenyltransferase that catalyzes the synthesis of the prenylated FMN cofactor (prenyl-FMN) for 4-hydroxy-3-polyprenylbenzoic acid decarboxylase UbiD. The prenyltransferase is metal-independent and links a dimethylallyl moiety from dimethylallyl monophosphate (DMAP) to the flavin N5 and C6 atoms of FMN. The chain is Flavin prenyltransferase UbiX from Streptomyces coelicolor (strain ATCC BAA-471 / A3(2) / M145).